The primary structure comprises 453 residues: Bifunctional protein GlmU (453 aa).

The pyrophosphorylase stretch occupies residues 1–231 (MERTCLAVIL…EIEMTGCNNR (231 aa)). Residues 10 to 13 (LAAG), K24, Q77, 82 to 83 (GT), 105 to 107 (YGD), G143, E157, N172, and N229 contribute to the UDP-N-acetyl-alpha-D-glucosamine site. D107 provides a ligand contact to Mg(2+). Position 229 (N229) interacts with Mg(2+). Residues 232–252 (AELAVIERFWQERRRREMMLA) form a linker region. The segment at 253–453 (GVTMIAPETV…AIKAAKRAKA (201 aa)) is N-acetyltransferase. The UDP-N-acetyl-alpha-D-glucosamine site is built by R318 and K336. Catalysis depends on H348, which acts as the Proton acceptor. Y351 and N362 together coordinate UDP-N-acetyl-alpha-D-glucosamine. Residues A365, 371–372 (NY), S390, S408, and R425 contribute to the acetyl-CoA site.

The protein in the N-terminal section; belongs to the N-acetylglucosamine-1-phosphate uridyltransferase family. This sequence in the C-terminal section; belongs to the transferase hexapeptide repeat family. Homotrimer. Mg(2+) serves as cofactor.

The protein resides in the cytoplasm. It carries out the reaction alpha-D-glucosamine 1-phosphate + acetyl-CoA = N-acetyl-alpha-D-glucosamine 1-phosphate + CoA + H(+). The catalysed reaction is N-acetyl-alpha-D-glucosamine 1-phosphate + UTP + H(+) = UDP-N-acetyl-alpha-D-glucosamine + diphosphate. It participates in nucleotide-sugar biosynthesis; UDP-N-acetyl-alpha-D-glucosamine biosynthesis; N-acetyl-alpha-D-glucosamine 1-phosphate from alpha-D-glucosamine 6-phosphate (route II): step 2/2. It functions in the pathway nucleotide-sugar biosynthesis; UDP-N-acetyl-alpha-D-glucosamine biosynthesis; UDP-N-acetyl-alpha-D-glucosamine from N-acetyl-alpha-D-glucosamine 1-phosphate: step 1/1. The protein operates within bacterial outer membrane biogenesis; LPS lipid A biosynthesis. Catalyzes the last two sequential reactions in the de novo biosynthetic pathway for UDP-N-acetylglucosamine (UDP-GlcNAc). The C-terminal domain catalyzes the transfer of acetyl group from acetyl coenzyme A to glucosamine-1-phosphate (GlcN-1-P) to produce N-acetylglucosamine-1-phosphate (GlcNAc-1-P), which is converted into UDP-GlcNAc by the transfer of uridine 5-monophosphate (from uridine 5-triphosphate), a reaction catalyzed by the N-terminal domain. The protein is Bifunctional protein GlmU of Rhizobium etli (strain CIAT 652).